An 892-amino-acid polypeptide reads, in one-letter code: Alpha-actinin-1 (892 aa).

Met-1 is subject to N-acetylmethionine. An actin-binding region spans residues 1–247 (MDHYDSQQTN…IMTYVSSFYH (247 aa)). Ser-6 bears the Phosphoserine mark. Tyr-12 bears the Phosphotyrosine; by FAK1 mark. Calponin-homology (CH) domains are found at residues 31 to 135 (KQQR…LRFA) and 144 to 250 (TSAK…HAFS). Residues Lys-95 and Lys-195 each carry the N6-acetyllysine modification. 4 Spectrin repeats span residues 274 to 384 (QLME…WLLN), 394 to 499 (HLAE…ALER), 509 to 620 (QLYL…ALTE), and 630 to 733 (RLRK…EVEN). An interaction with DDN region spans residues 274–733 (QLMEDYEKLA…IARTINEVEN (460 aa)). Position 471 is a phosphoserine (Ser-471). Residue Lys-676 is modified to N6-acetyllysine. Phosphoserine is present on Ser-677. 2 consecutive EF-hand domains span residues 746 to 781 (EQMN…LGYD) and 787 to 822 (QGEA…ETAD). Asp-759, Asp-761, Ser-763, Thr-765, and Glu-770 together coordinate Ca(2+). Ser-890 bears the Phosphoserine mark.

It belongs to the alpha-actinin family. Homodimer; antiparallel. Interacts with MYOZ2, TTID and LPP. Interacts with DDN. Interacts with PSD. Interacts with MICALL2. Interacts with DNM2 and CTTN. Interacts with PDLIM1. Interacts with PDLIM2. Interacts with PDLIM4 (via PDZ domain). Interacts with IGSF8.

It localises to the cytoplasm. The protein localises to the cytoskeleton. Its subcellular location is the myofibril. It is found in the sarcomere. The protein resides in the z line. It localises to the cell membrane. The protein localises to the cell junction. Its subcellular location is the cell projection. It is found in the ruffle. In terms of biological role, F-actin cross-linking protein which is thought to anchor actin to a variety of intracellular structures. Association with IGSF8 regulates the immune synapse formation and is required for efficient T-cell activation. The chain is Alpha-actinin-1 (Actn1) from Mus musculus (Mouse).